A 140-amino-acid polypeptide reads, in one-letter code: Putative pre-16S rRNA nuclease (140 aa).

This sequence belongs to the YqgF nuclease family.

It localises to the cytoplasm. In terms of biological role, could be a nuclease involved in processing of the 5'-end of pre-16S rRNA. This Vibrio vulnificus (strain CMCP6) protein is Putative pre-16S rRNA nuclease.